The sequence spans 356 residues: Tyrosine recombinase XerS (356 aa).

One can recognise a Core-binding (CB) domain in the interval 16–121; that stretch reads TMPWYILEYY…ALSSLYKYLT (106 aa). The region spanning 169–354 is the Tyr recombinase domain; the sequence is EFLQYIDTEY…VNDEQKNALD (186 aa). Active-site residues include arginine 210, lysine 234, histidine 306, arginine 309, and histidine 332. Tyrosine 341 functions as the O-(3'-phospho-DNA)-tyrosine intermediate in the catalytic mechanism.

This sequence belongs to the 'phage' integrase family. XerS subfamily.

It is found in the cytoplasm. Its activity is regulated as follows. FtsK is required for recombination. In terms of biological role, site-specific tyrosine recombinase, which acts by catalyzing the cutting and rejoining of the recombining DNA molecules. Essential to convert dimers of the bacterial chromosome into monomers to permit their segregation at cell division. In Streptococcus sanguinis (strain SK36), this protein is Tyrosine recombinase XerS.